Here is a 224-residue protein sequence, read N- to C-terminus: Ribonuclease HII (224 aa).

In terms of domain architecture, RNase H type-2 spans 21 to 223 (RAIAGIDEAG…IRNAALEGEQ (203 aa)). A divalent metal cation-binding residues include D27, E28, and D124.

Belongs to the RNase HII family. Requires Mn(2+) as cofactor. Mg(2+) is required as a cofactor.

The protein localises to the cytoplasm. It carries out the reaction Endonucleolytic cleavage to 5'-phosphomonoester.. Endonuclease that specifically degrades the RNA of RNA-DNA hybrids. The sequence is that of Ribonuclease HII from Roseiflexus castenholzii (strain DSM 13941 / HLO8).